Reading from the N-terminus, the 545-residue chain is Prolyl 3-hydroxylase OGFOD1 (545 aa).

Residues Met-1–Ser-23 are disordered. A Fe2OG dioxygenase domain is found at Pro-137 to Gly-239. Fe cation is bound by residues His-155 and Asp-157. A 2-oxoglutarate-binding site is contributed by Tyr-169. His-218 is a binding site for Fe cation. Residue Arg-230 participates in 2-oxoglutarate binding. Acidic residues predominate over residues Ser-371–Gly-380. Positions Ser-371 to Met-437 are disordered. Residues Glu-383 to Glu-393 show a composition bias toward low complexity. Polar residues predominate over residues Pro-402–Gly-417.

The protein belongs to the TPA1 family. In terms of assembly, monomer. Requires Fe(2+) as cofactor. It depends on L-ascorbate as a cofactor.

Its subcellular location is the cytoplasm. The protein resides in the nucleus. It catalyses the reaction [ribosomal protein uS12]-L-proline + 2-oxoglutarate + O2 = [ribosomal protein uS12]-(3S)-3-hydroxy-L-proline + succinate + CO2. Prolyl 3-hydroxylase that catalyzes 3-hydroxylation of 'Pro-62' of small ribosomal subunit uS12 (RPS23), thereby regulating protein translation termination efficiency. Involved in stress granule formation. In Mus musculus (Mouse), this protein is Prolyl 3-hydroxylase OGFOD1 (Ogfod1).